Consider the following 219-residue polypeptide: MNDRGVPNSRTGPSLLALLPAANSYAAAYSPANRRAVGVGGGSYKSPTRGSPGTRGGWKAPLCLTLIGGIDGTVAALPPPAVYSLTFSGLGEPPQGAPRRGGGGADAGERTERGSTANKKKRQRGVLSPPSALGSSPAGRGRPAPAIAAAKSSPLSASAAPGRCGARPRAPSRATRERRPRGNPRAPLRRGARGRRRSHTRGPARTTVGAVEPRAGLCE.

The N-terminal stretch at 1 to 26 (MNDRGVPNSRTGPSLLALLPAANSYA) is a signal peptide. Disordered regions lie at residues 36 to 57 (AVGV…TRGG) and 88 to 219 (SGLG…GLCE). Positions 127–173 (LSPPSALGSSPAGRGRPAPAIAAAKSSPLSASAAPGRCGARPRAPSR) are enriched in low complexity. The span at 176–202 (RERRPRGNPRAPLRRGARGRRRSHTRG) shows a compositional bias: basic residues.

This is an uncharacterized protein from Gallid herpesvirus 2 (strain Chicken/Md5/ATCC VR-987) (GaHV-2).